The primary structure comprises 258 residues: Shikimate dehydrogenase (NADP(+)) (258 aa).

Shikimate is bound by residues 14–16 (SES) and threonine 61. Lysine 65 (proton acceptor) is an active-site residue. Shikimate contacts are provided by asparagine 86 and aspartate 101. NADP(+) contacts are provided by residues 125 to 129 (GSGGS) and leucine 211. Residue tyrosine 213 participates in shikimate binding. Glycine 234 is an NADP(+) binding site.

It belongs to the shikimate dehydrogenase family. As to quaternary structure, homodimer.

The enzyme catalyses shikimate + NADP(+) = 3-dehydroshikimate + NADPH + H(+). The protein operates within metabolic intermediate biosynthesis; chorismate biosynthesis; chorismate from D-erythrose 4-phosphate and phosphoenolpyruvate: step 4/7. Its function is as follows. Involved in the biosynthesis of the chorismate, which leads to the biosynthesis of aromatic amino acids. Catalyzes the reversible NADPH linked reduction of 3-dehydroshikimate (DHSA) to yield shikimate (SA). This Clostridium botulinum (strain Loch Maree / Type A3) protein is Shikimate dehydrogenase (NADP(+)).